A 105-amino-acid polypeptide reads, in one-letter code: uncharacterized protein (105 aa).

Serine 2 is modified (N-acetylserine).

This is an uncharacterized protein from Saccharomyces cerevisiae (strain ATCC 204508 / S288c) (Baker's yeast).